The primary structure comprises 128 residues: Ribosome-binding factor A (128 aa).

It belongs to the RbfA family. Monomer. Binds 30S ribosomal subunits, but not 50S ribosomal subunits or 70S ribosomes.

Its subcellular location is the cytoplasm. Functionally, one of several proteins that assist in the late maturation steps of the functional core of the 30S ribosomal subunit. Associates with free 30S ribosomal subunits (but not with 30S subunits that are part of 70S ribosomes or polysomes). Required for efficient processing of 16S rRNA. May interact with the 5'-terminal helix region of 16S rRNA. The polypeptide is Ribosome-binding factor A (Saccharophagus degradans (strain 2-40 / ATCC 43961 / DSM 17024)).